A 218-amino-acid polypeptide reads, in one-letter code: PKHD-type hydroxylase IL0759 (218 aa).

The Fe2OG dioxygenase domain occupies 76–170 (QVARVTINRY…RLAMIGWVQS (95 aa)). Fe cation contacts are provided by His94, Asp96, and His151. Arg161 contributes to the 2-oxoglutarate binding site.

Fe(2+) serves as cofactor. L-ascorbate is required as a cofactor.

This chain is PKHD-type hydroxylase IL0759, found in Idiomarina loihiensis (strain ATCC BAA-735 / DSM 15497 / L2-TR).